A 666-amino-acid chain; its full sequence is tRNA 5-methylaminomethyl-2-thiouridine biosynthesis bifunctional protein MnmC (666 aa).

Residues 1 to 245 are tRNA (mnm(5)s(2)U34)-methyltransferase; it reads MKQYAIQPAT…KREMLCGVME (245 aa). The segment at 270–666 is FAD-dependent cmnm(5)s(2)U34 oxidoreductase; that stretch reads IGGGIASALL…RKLLKGKAVK (397 aa).

The protein in the N-terminal section; belongs to the methyltransferase superfamily. tRNA (mnm(5)s(2)U34)-methyltransferase family. It in the C-terminal section; belongs to the DAO family. It depends on FAD as a cofactor.

The protein localises to the cytoplasm. It carries out the reaction 5-aminomethyl-2-thiouridine(34) in tRNA + S-adenosyl-L-methionine = 5-methylaminomethyl-2-thiouridine(34) in tRNA + S-adenosyl-L-homocysteine + H(+). Catalyzes the last two steps in the biosynthesis of 5-methylaminomethyl-2-thiouridine (mnm(5)s(2)U) at the wobble position (U34) in tRNA. Catalyzes the FAD-dependent demodification of cmnm(5)s(2)U34 to nm(5)s(2)U34, followed by the transfer of a methyl group from S-adenosyl-L-methionine to nm(5)s(2)U34, to form mnm(5)s(2)U34. The chain is tRNA 5-methylaminomethyl-2-thiouridine biosynthesis bifunctional protein MnmC from Salmonella paratyphi B (strain ATCC BAA-1250 / SPB7).